We begin with the raw amino-acid sequence, 176 residues long: dCTP deaminase (176 aa).

Residues 99 to 104 (RSTLAR) and D115 each bind dCTP. E125 acts as the Proton donor/acceptor in catalysis. Residue Q163 participates in dCTP binding.

The protein belongs to the dCTP deaminase family. In terms of assembly, homotrimer.

The enzyme catalyses dCTP + H2O + H(+) = dUTP + NH4(+). The protein operates within pyrimidine metabolism; dUMP biosynthesis; dUMP from dCTP (dUTP route): step 1/2. In terms of biological role, catalyzes the deamination of dCTP to dUTP. The protein is dCTP deaminase of Pyrobaculum calidifontis (strain DSM 21063 / JCM 11548 / VA1).